Here is a 201-residue protein sequence, read N- to C-terminus: Ras-like GTP-binding protein YPT1 (201 aa).

GTP-binding positions include G15–C23, Y33–T40, D63–Q67, N121–D124, and S151–K153. The short motif at Y37–F45 is the Effector region element. 2 S-geranylgeranyl cysteine lipidation sites follow: C200 and C201.

Belongs to the small GTPase superfamily. Rab family.

It is found in the endoplasmic reticulum membrane. Its subcellular location is the golgi apparatus membrane. The protein resides in the cytoplasm. The protein localises to the preautophagosomal structure membrane. With respect to regulation, rab activation is generally mediated by a guanine exchange factor (GEF), while inactivation through hydrolysis of bound GTP is catalyzed by a GTPase activating protein (GAP). In terms of biological role, the small GTPases Rab are key regulators of intracellular membrane trafficking, from the formation of transport vesicles to their fusion with membranes. Rabs cycle between an inactive GDP-bound form and an active GTP-bound form that is able to recruit to membranes different set of downstream effectors directly responsible for vesicle formation, movement, tethering and fusion. YPT1 regulates the trafficking of secretory vesicles from the endoplasmic reticulum (ER) to the Golgi. Plays a role in the initial events of the autophagic vacuole development which take place at specialized regions of the endoplasmic reticulum. Also involved in the recycling of membrane proteins. This chain is Ras-like GTP-binding protein YPT1 (YPT1), found in Phytophthora infestans (Potato late blight agent).